Reading from the N-terminus, the 468-residue chain is 6-phospho-beta-galactosidase (468 aa).

Positions 19, 116, 159, 160, and 297 each coordinate D-galactose 6-phosphate. E160 acts as the Proton donor in catalysis. Catalysis depends on E375, which acts as the Nucleophile. Residues S428, W429, K435, and Y437 each coordinate D-galactose 6-phosphate.

The protein belongs to the glycosyl hydrolase 1 family.

It carries out the reaction a 6-phospho-beta-D-galactoside + H2O = D-galactose 6-phosphate + an alcohol. Its pathway is carbohydrate metabolism; lactose degradation; D-galactose 6-phosphate and beta-D-glucose from lactose 6-phosphate: step 1/1. This Streptococcus pyogenes serotype M3 (strain ATCC BAA-595 / MGAS315) protein is 6-phospho-beta-galactosidase.